We begin with the raw amino-acid sequence, 238 residues long: Sugar fermentation stimulation protein homolog (238 aa).

The protein belongs to the SfsA family.

The chain is Sugar fermentation stimulation protein homolog from Histophilus somni (strain 129Pt) (Haemophilus somnus).